Reading from the N-terminus, the 435-residue chain is Histone acetyltransferase type B subunit 2 (435 aa).

5 WD repeats span residues 135-175 (NHAG…SKAP), 188-228 (GQTK…KQDP), 238-278 (GHSA…TAKA), 284-324 (GHNA…TKHH), and 328-368 (AHTN…AEQT). An interaction with the histone H4 N-terminus region spans residues 370–374 (DDAED). The WD 6 repeat unit spans residues 385–425 (GHTSKVCDISWSPSSPWTIASASEDNILQVWEPSRHLRTPY).

The protein belongs to the WD repeat RBAP46/RBAP48/MSI1 family. In terms of assembly, component of the HAT-B complex composed of at least HAT1 and HAT2. The HAT-B complex binds to histone H4 tail.

It localises to the cytoplasm. The protein resides in the nucleus. In terms of biological role, regulatory subunit of the histone acetylase B (HAT-B) complex. The complex acetylates 'Lys-12' of histone H4 which is required for telomeric silencing. The sequence is that of Histone acetyltransferase type B subunit 2 (HAT2) from Cryptococcus neoformans var. neoformans serotype D (strain B-3501A) (Filobasidiella neoformans).